We begin with the raw amino-acid sequence, 496 residues long: Probable cytosol aminopeptidase (496 aa).

Positions 266 and 271 each coordinate Mn(2+). Lys-278 is a catalytic residue. Mn(2+)-binding residues include Asp-289, Asp-348, and Glu-350. The active site involves Arg-352.

The protein belongs to the peptidase M17 family. The cofactor is Mn(2+).

The protein resides in the cytoplasm. The enzyme catalyses Release of an N-terminal amino acid, Xaa-|-Yaa-, in which Xaa is preferably Leu, but may be other amino acids including Pro although not Arg or Lys, and Yaa may be Pro. Amino acid amides and methyl esters are also readily hydrolyzed, but rates on arylamides are exceedingly low.. It carries out the reaction Release of an N-terminal amino acid, preferentially leucine, but not glutamic or aspartic acids.. Its function is as follows. Presumably involved in the processing and regular turnover of intracellular proteins. Catalyzes the removal of unsubstituted N-terminal amino acids from various peptides. The protein is Probable cytosol aminopeptidase of Azotobacter vinelandii (strain DJ / ATCC BAA-1303).